Consider the following 206-residue polypeptide: IMPACT family member HI_0722 (206 aa).

The protein belongs to the IMPACT family.

The sequence is that of IMPACT family member HI_0722 from Haemophilus influenzae (strain ATCC 51907 / DSM 11121 / KW20 / Rd).